Reading from the N-terminus, the 88-residue chain is Insertion element ISR1 uncharacterized 10 kDa protein A3 (88 aa).

This sequence belongs to the transposase 8 family.

This Rhizobium sp protein is Insertion element ISR1 uncharacterized 10 kDa protein A3.